We begin with the raw amino-acid sequence, 160 residues long: Peptide methionine sulfoxide reductase MsrA (160 aa).

Cysteine 11 is an active-site residue.

It belongs to the MsrA Met sulfoxide reductase family.

It catalyses the reaction L-methionyl-[protein] + [thioredoxin]-disulfide + H2O = L-methionyl-(S)-S-oxide-[protein] + [thioredoxin]-dithiol. It carries out the reaction [thioredoxin]-disulfide + L-methionine + H2O = L-methionine (S)-S-oxide + [thioredoxin]-dithiol. In terms of biological role, has an important function as a repair enzyme for proteins that have been inactivated by oxidation. Catalyzes the reversible oxidation-reduction of methionine sulfoxide in proteins to methionine. The chain is Peptide methionine sulfoxide reductase MsrA from Malacoplasma penetrans (strain HF-2) (Mycoplasma penetrans).